The following is a 354-amino-acid chain: Divinyl chlorophyll a/b light-harvesting protein PcbF (354 aa).

Helical transmembrane passes span 27 to 47, 88 to 108, 140 to 160, 201 to 221, 248 to 268, and 315 to 335; these read FIASHAAHTGMIAFGAGSNTL, VVTLAILHLILSMVYGAGGLL, FILGHHLILFGLACAWFVEWA, VMGGHAFLAFAEITGGCFHAI, AILSFSLAGIGWMAIVAAFWC, and TANFHYIAGFFAFQGHLWHAL.

The protein belongs to the PsbB/PsbC family. IsiA/Pcb subfamily. In terms of assembly, the antenna complex consists of divinyl chlorophylls (a and b) and divinyl chlorophyll a/b binding proteins and binds more divinyl chlorophyll b than does the antenna complex from high-light-adapted Prochlorococcus. Divinyl chlorophyll a is required as a cofactor. The cofactor is divinyl chlorophyll b.

It localises to the cellular thylakoid membrane. Its function is as follows. The antenna complex functions as a light receptor, it captures and delivers excitation energy to photosystems II and I. The Prochlorales pcb genes are not related to higher plant LHCs. In Prochlorococcus marinus (strain SARG / CCMP1375 / SS120), this protein is Divinyl chlorophyll a/b light-harvesting protein PcbF (pcbF).